A 484-amino-acid chain; its full sequence is MDNSSGQNSRTASSASTSKIVNYSSPVSPGVAAATSSSSSSSSSGMSSSQEDTVLGLFTPKKEFPNAKMLQTIREKLMTPGGACDLLALGIAAEPTDQQPVKLIQQRYLISAQPSHISAAVAAKTPASYRHLVDLTASNLRCVDIFTGEQFLCRIVNEPLHKVQRAYFQLQQHDEELRRSTIYGHPLIRPVHDIIPLTKDRTYILIAPVPQERDSTGGVTGVYENLHTYIRHAKRLCETEARAIFHQICQTVQVCHRNGIILRDLKLKRFYFIDEARTKLQYESLEGSMILDGEDDTLSDKIGCPLYTAPELLCPQQTYKGKPADMWSLGVILYTMLVGQYPFYEKANCNLITVIRHGNVQIPLTLSKSVRWLLLSLLRKDYTERMTASHIFLTPWLREQRPFHMYLPVDVEVAEDWSDAEEDEGTAADAMDDDEEGLCPLGDKHEYEDIGVEPLDYTRSTLQMAQNANGLSTEPEPDTDVDMG.

Residues 1-23 show a composition bias toward polar residues; it reads MDNSSGQNSRTASSASTSKIVNY. The disordered stretch occupies residues 1 to 51; it reads MDNSSGQNSRTASSASTSKIVNYSSPVSPGVAAATSSSSSSSSSGMSSSQE. Positions 24 to 49 are enriched in low complexity; it reads SSPVSPGVAAATSSSSSSSSSGMSSS. In terms of domain architecture, Protein kinase spans 129–397; sequence YRHLVDLTAS…ASHIFLTPWL (269 aa). Acidic residues-rich tracts occupy residues 420 to 437 and 475 to 484; these read AEED…DEEG and PEPDTDVDMG. Disordered stretches follow at residues 420 to 443 and 464 to 484; these read AEED…PLGD and MAQN…VDMG.

This sequence belongs to the protein kinase superfamily. CAMK Ser/Thr protein kinase family. Tribbles subfamily. Interacts with slbo. Interacts with Akt1. As to expression, expressed throughout the brain with highest levels of expression detected in the cell body rind and lower levels of expression detected in the neurophil (at protein level).

It is found in the nucleus. The protein localises to the cytoplasm. Its subcellular location is the cell cortex. Adapter protein that negatively regulates different signaling pathways to coordinate cell differentiation, proliferation, migration and growth. Functions by binding to key regulatory proteins and either blocks their activity or regulates their turnover by the proteasome. In various developing tissues functions as a cell cycle regulator that mediates cell proliferation according to the requirements of the developmental program. Acts by inducing the proteasomal degradation of the CD25 mitotic activators stg and twe at critical stages of development to delay entry into mitosis and thus mediate cell proliferation. During gastrulation, negatively regulates stg to delay mitosis in the ventral region of the embryonic mesoderm thus allowing invagination to be completed before cell division takes place. Delaying stg-dependent mitosis during bristle development and in migrating germline pole cells also arrests their cell divisions, whereas in cystocytes it promotes their cell divisions. Involved in the regulation of the mid-blastula transition; promotes the destruction of twe resulting in the cell cycle arrest in G2 of cycle 14 which delays mitosis and thus reduces cell proliferation allowing cell fate specification and morphogenesis to take place. In germline cells, blocks border cell migration during oogenesis by binding to slbo/C/EBP and promoting its ubiquitination and degradation by the proteasome. May function in a negative feedback loop with slbo to coordinate proper border cell migration. During tissue growth negatively regulates insulin signaling by binding to Akt1 and blocking its phosphorylation-dependent activation. However it may also function downstream in the insulin signaling pathway, acting with Akt1 to direct foxo degradation. Essential for the proper formation of operant place and aversive olfactory memories. The polypeptide is Tribbles (Drosophila melanogaster (Fruit fly)).